The primary structure comprises 264 residues: COP9 signalosome complex subunit 7b (264 aa).

Alanine 2 is modified (N-acetylalanine). The 158-residue stretch at 2 to 159 (AGEQKPSSNL…QLLEVDFCIG (158 aa)) folds into the PCI domain. The stretch at 194-237 (RANQYKENHHRTQQQVEAEVSNIKKTLKATASSSAQEMEQQLAE) forms a coiled coil. Positions 223–232 (TASSSAQEME) are enriched in polar residues. The tract at residues 223–264 (TASSSAQEMEQQLAERECPPHTEQRQPTKKMSKVKGLVSSRH) is disordered. A compositionally biased stretch (basic and acidic residues) spans 235–248 (LAERECPPHTEQRQ).

Belongs to the CSN7/EIF3M family. CSN7 subfamily. As to quaternary structure, component of the CSN complex, composed of COPS1/GPS1, COPS2, COPS3, COPS4, COPS5, COPS6, COPS7 (COPS7A or COPS7B) and COPS8 and COPS9. In the complex, it probably interacts directly with COPS1, COPS2, COPS4, COPS5, COPS6 and COPS8. Interacts with EIF3S6.

The protein localises to the cytoplasm. Its subcellular location is the nucleus. Component of the COP9 signalosome complex (CSN), a complex involved in various cellular and developmental processes. The CSN complex is an essential regulator of the ubiquitin (Ubl) conjugation pathway by mediating the deneddylation of the cullin subunits of SCF-type E3 ligase complexes, leading to decrease the Ubl ligase activity of SCF-type complexes such as SCF, CSA or DDB2. The complex is also involved in phosphorylation of p53/TP53, JUN, I-kappa-B-alpha/NFKBIA, ITPK1 and IRF8/ICSBP, possibly via its association with CK2 and PKD kinases. CSN-dependent phosphorylation of TP53 and JUN promotes and protects degradation by the Ubl system, respectively. This chain is COP9 signalosome complex subunit 7b (Cops7b), found in Mus musculus (Mouse).